The chain runs to 455 residues: D-inositol 3-phosphate glycosyltransferase (455 aa).

A disordered region spans residues 1-25; it reads MSQHVSRLGGLRGRSHGHGAFGGPY. Position 45 (histidine 45) interacts with 1D-myo-inositol 3-phosphate. Residues 51–52 and glycine 59 contribute to the UDP-N-acetyl-alpha-D-glucosamine site; that span reads QP. 1D-myo-inositol 3-phosphate-binding positions include 56-61, lysine 114, tyrosine 147, threonine 171, and arginine 191; that span reads DAGGMN. UDP-N-acetyl-alpha-D-glucosamine-binding residues include arginine 266 and lysine 271. Mg(2+) contacts are provided by tyrosine 341, arginine 342, and alanine 344. Positions 354 and 362 each coordinate UDP-N-acetyl-alpha-D-glucosamine. Threonine 368 lines the Mg(2+) pocket.

Belongs to the glycosyltransferase group 1 family. MshA subfamily. As to quaternary structure, homodimer.

It carries out the reaction 1D-myo-inositol 3-phosphate + UDP-N-acetyl-alpha-D-glucosamine = 1D-myo-inositol 2-acetamido-2-deoxy-alpha-D-glucopyranoside 3-phosphate + UDP + H(+). Its function is as follows. Catalyzes the transfer of a N-acetyl-glucosamine moiety to 1D-myo-inositol 3-phosphate to produce 1D-myo-inositol 2-acetamido-2-deoxy-glucopyranoside 3-phosphate in the mycothiol biosynthesis pathway. The sequence is that of D-inositol 3-phosphate glycosyltransferase from Streptomyces bingchenggensis (strain BCW-1).